Consider the following 147-residue polypeptide: Nitric oxide reductase subunit C (147 aa).

Residues 13–29 traverse the membrane as a helical; Signal-anchor segment; that stretch reads VFYGGSLFFIAVFVGLT. Heme c is bound by residues cysteine 59, cysteine 62, and histidine 63.

In terms of assembly, heterodimer of cytochromes b (large subunit) and c (small subunit).

It is found in the cell membrane. Its function is as follows. Component of the anaerobic respiratory chain that transforms nitrate to dinitrogen (denitrification). This chain is Nitric oxide reductase subunit C (norC), found in Cereibacter sphaeroides (strain ATCC 17025 / ATH 2.4.3) (Rhodobacter sphaeroides).